The following is a 209-amino-acid chain: Mitochondrial import inner membrane translocase subunit Tim23 (209 aa).

A run of 3 helical transmembrane segments spans residues 73–93 (FELA…FGAL), 125–145 (ALWA…GVIV), and 180–200 (GGLA…WEHI).

The protein belongs to the Tim17/Tim22/Tim23 family. As to quaternary structure, component of the TIM23 complex at least composed of timm23, timm17 and timm50. The complex interacts with the timm44 component of the PAM complex.

It localises to the mitochondrion inner membrane. Essential component of the TIM23 complex, a complex that mediates the translocation of transit peptide-containing proteins across the mitochondrial inner membrane. The polypeptide is Mitochondrial import inner membrane translocase subunit Tim23 (timm23) (Xenopus laevis (African clawed frog)).